The following is an 80-amino-acid chain: Exodeoxyribonuclease 7 small subunit (80 aa).

Belongs to the XseB family. In terms of assembly, heterooligomer composed of large and small subunits.

The protein localises to the cytoplasm. The catalysed reaction is Exonucleolytic cleavage in either 5'- to 3'- or 3'- to 5'-direction to yield nucleoside 5'-phosphates.. Bidirectionally degrades single-stranded DNA into large acid-insoluble oligonucleotides, which are then degraded further into small acid-soluble oligonucleotides. The sequence is that of Exodeoxyribonuclease 7 small subunit from Pseudomonas putida (strain W619).